The following is a 504-amino-acid chain: Xylose import ATP-binding protein XylG (504 aa).

2 ABC transporter domains span residues 6–243 (LEMQ…VGRE) and 262–504 (VRNF…TGGK). 38–45 (GENGAGKS) is an ATP binding site.

It belongs to the ABC transporter superfamily. Xylose importer (TC 3.A.1.2.4) family. In terms of assembly, the complex is composed of two ATP-binding proteins (XylG), two transmembrane proteins (XylH) and a solute-binding protein (XylF).

The protein resides in the cell membrane. The catalysed reaction is D-xylose(out) + ATP + H2O = D-xylose(in) + ADP + phosphate + H(+). Part of the ABC transporter complex XylFGH involved in xylose import. Responsible for energy coupling to the transport system. This Moorella thermoacetica (strain ATCC 39073 / JCM 9320) protein is Xylose import ATP-binding protein XylG.